A 477-amino-acid polypeptide reads, in one-letter code: Spliceosome-associated protein CWC27 homolog (477 aa).

Positions 11–166 (SNGKVLLKTT…NPHKIKCTEV (156 aa)) constitute a PPIase cyclophilin-type domain. 2 disordered regions span residues 203 to 355 (LLSF…AENT) and 401 to 477 (TQAI…KERR). The segment covering 208-218 (EEAEEDEEEVN) has biased composition (acidic residues). Basic and acidic residues-rich tracts occupy residues 230-240 (SSHDLLKDDPR) and 247-258 (VEREKDSQSADS). Residues 259–279 (DKDEDEMSDDDDEEEDDEMDS) show a composition bias toward acidic residues. Composition is skewed to basic and acidic residues over residues 280 to 299 (DEKH…DPSK), 311 to 353 (EERK…KEAE), and 430 to 442 (QFEE…KDAN). Positions 308–381 (DEAEERKSSR…EEVRKKNTNK (74 aa)) form a coiled coil.

The protein belongs to the cyclophilin-type PPIase family. In terms of assembly, part of the activated spliceosome B/catalytic step 1 spliceosome, one of the forms of the spliceosome which has a well-formed active site but still cannot catalyze the branching reaction and is composed at least of 52 proteins, the U2, U5 and U6 snRNAs and the pre-mRNA. Recruited during early steps of activated spliceosome B maturation, it is probably one of the first proteins released from this complex as he matures to the spliceosome C complex. Component of the minor spliceosome, which splices U12-type introns.

It localises to the nucleus. In terms of biological role, as part of the spliceosome, plays a role in pre-mRNA splicing. Probable inactive PPIase with no peptidyl-prolyl cis-trans isomerase activity. This chain is Spliceosome-associated protein CWC27 homolog (cwc27), found in Xenopus laevis (African clawed frog).